A 729-amino-acid chain; its full sequence is Fatty acid oxidation complex subunit alpha (729 aa).

Residues 1–189 (MLYKGDTLYL…KIGLVDGVVK (189 aa)) are enoyl-CoA hydratase/isomerase. Residue Asp296 participates in substrate binding. The segment at 311–729 (ETPKQAAVLG…ARPVGDLKTA (419 aa)) is 3-hydroxyacyl-CoA dehydrogenase. NAD(+) is bound by residues Met324, Asp343, 400 to 402 (VVE), Lys407, and Ser429. His450 functions as the For 3-hydroxyacyl-CoA dehydrogenase activity in the catalytic mechanism. Asn453 lines the NAD(+) pocket. Residues Asn500 and Tyr660 each contribute to the substrate site. Positions 708-729 (RHNEPYYPPVEPARPVGDLKTA) are disordered.

It in the N-terminal section; belongs to the enoyl-CoA hydratase/isomerase family. In the C-terminal section; belongs to the 3-hydroxyacyl-CoA dehydrogenase family. As to quaternary structure, heterotetramer of two alpha chains (FadB) and two beta chains (FadA).

The catalysed reaction is a (3S)-3-hydroxyacyl-CoA + NAD(+) = a 3-oxoacyl-CoA + NADH + H(+). It catalyses the reaction a (3S)-3-hydroxyacyl-CoA = a (2E)-enoyl-CoA + H2O. The enzyme catalyses a 4-saturated-(3S)-3-hydroxyacyl-CoA = a (3E)-enoyl-CoA + H2O. It carries out the reaction (3S)-3-hydroxybutanoyl-CoA = (3R)-3-hydroxybutanoyl-CoA. The catalysed reaction is a (3Z)-enoyl-CoA = a 4-saturated (2E)-enoyl-CoA. It catalyses the reaction a (3E)-enoyl-CoA = a 4-saturated (2E)-enoyl-CoA. The protein operates within lipid metabolism; fatty acid beta-oxidation. In terms of biological role, involved in the aerobic and anaerobic degradation of long-chain fatty acids via beta-oxidation cycle. Catalyzes the formation of 3-oxoacyl-CoA from enoyl-CoA via L-3-hydroxyacyl-CoA. It can also use D-3-hydroxyacyl-CoA and cis-3-enoyl-CoA as substrate. This Escherichia coli O17:K52:H18 (strain UMN026 / ExPEC) protein is Fatty acid oxidation complex subunit alpha.